The following is a 359-amino-acid chain: S-adenosylmethionine:tRNA ribosyltransferase-isomerase (359 aa).

This sequence belongs to the QueA family. As to quaternary structure, monomer.

It is found in the cytoplasm. The catalysed reaction is 7-aminomethyl-7-carbaguanosine(34) in tRNA + S-adenosyl-L-methionine = epoxyqueuosine(34) in tRNA + adenine + L-methionine + 2 H(+). Its pathway is tRNA modification; tRNA-queuosine biosynthesis. Functionally, transfers and isomerizes the ribose moiety from AdoMet to the 7-aminomethyl group of 7-deazaguanine (preQ1-tRNA) to give epoxyqueuosine (oQ-tRNA). This is S-adenosylmethionine:tRNA ribosyltransferase-isomerase from Ralstonia pickettii (strain 12J).